The chain runs to 409 residues: L-cysteine:1D-myo-inositol 2-amino-2-deoxy-alpha-D-glucopyranoside ligase (409 aa).

C43 lines the Zn(2+) pocket. L-cysteinyl-5'-AMP contacts are provided by residues 43-46 (CGIT), T58, and 81-83 (NVT). The 'HIGH' region signature appears at 45–55 (ITPYDATHMGH). Positions 183 to 188 (ERGGDP) match the 'ERGGDP' region motif. W224 contacts L-cysteinyl-5'-AMP. C228 is a Zn(2+) binding site. 246 to 248 (GSD) is a binding site for L-cysteinyl-5'-AMP. Residue H253 participates in Zn(2+) binding. V280 lines the L-cysteinyl-5'-AMP pocket. The short motif at 286-290 (KMSKS) is the 'KMSKS' region element.

It belongs to the class-I aminoacyl-tRNA synthetase family. MshC subfamily. As to quaternary structure, monomer. Zn(2+) is required as a cofactor.

It carries out the reaction 1D-myo-inositol 2-amino-2-deoxy-alpha-D-glucopyranoside + L-cysteine + ATP = 1D-myo-inositol 2-(L-cysteinylamino)-2-deoxy-alpha-D-glucopyranoside + AMP + diphosphate + H(+). Functionally, catalyzes the ATP-dependent condensation of GlcN-Ins and L-cysteine to form L-Cys-GlcN-Ins. The sequence is that of L-cysteine:1D-myo-inositol 2-amino-2-deoxy-alpha-D-glucopyranoside ligase from Streptomyces scabiei (strain 87.22).